Reading from the N-terminus, the 98-residue chain is Dehydrin HIRD11 (98 aa).

The interval 1 to 98 (MAGLINKIGD…HSSSSDSDSD (98 aa)) is disordered. Basic and acidic residues predominate over residues 19–72 (KEGEHKKEEEHKKHVDEHKSGEHKEGIVDKIKDKIHGGEGKSHDGEGKSHDGEK). The segment covering 73–82 (KKKKDKKEKK) has biased composition (basic residues).

This sequence belongs to the KS-type dehydrin family. Interacts with PXL1. Post-translationally, phosphorylated in vivo. Phosphorylated in vitro by PXL1. Highly expressed in the cambial zone of the stem vasculature (at protein level). Expressed in roots, rosettes leaves, stems, cauline leaves, flowers and siliques.

It is found in the cytoplasm. It localises to the nucleus. Its function is as follows. Intrinsically disordered and metal-binding protein. Binds to the divalent cations cobalt, nickel, copper and zinc, but not to magnesium, calcium, manganese or cadmium. Binding to metal ions decreases disordered state, decreases susceptibility to trypsin and promotes self-association. Can reduce the formation of reactive oxygen species (ROS) in a copper-ascorbate in vitro system. This is Dehydrin HIRD11 from Arabidopsis thaliana (Mouse-ear cress).